The following is a 475-amino-acid chain: Ribulose bisphosphate carboxylase large chain (475 aa).

Residues 1–2 (MS) constitute a propeptide that is removed on maturation. Position 3 is an N-acetylproline (P3). Substrate-binding residues include N123 and T173. Residue K175 is the Proton acceptor of the active site. K177 provides a ligand contact to substrate. Mg(2+) contacts are provided by K201, D203, and E204. An N6-carboxylysine modification is found at K201. The active-site Proton acceptor is H294. Residues R295, H327, and S379 each coordinate substrate.

The protein belongs to the RuBisCO large chain family. Type I subfamily. As to quaternary structure, heterohexadecamer of 8 large chains and 8 small chains; disulfide-linked. The disulfide link is formed within the large subunit homodimers. Mg(2+) is required as a cofactor. Post-translationally, the disulfide bond which can form in the large chain dimeric partners within the hexadecamer appears to be associated with oxidative stress and protein turnover.

Its subcellular location is the plastid. It is found in the chloroplast. The enzyme catalyses 2 (2R)-3-phosphoglycerate + 2 H(+) = D-ribulose 1,5-bisphosphate + CO2 + H2O. The catalysed reaction is D-ribulose 1,5-bisphosphate + O2 = 2-phosphoglycolate + (2R)-3-phosphoglycerate + 2 H(+). Its function is as follows. RuBisCO catalyzes two reactions: the carboxylation of D-ribulose 1,5-bisphosphate, the primary event in carbon dioxide fixation, as well as the oxidative fragmentation of the pentose substrate in the photorespiration process. Both reactions occur simultaneously and in competition at the same active site. This is Ribulose bisphosphate carboxylase large chain from Welwitschia mirabilis (Tree tumbo).